The sequence spans 466 residues: ATP synthase subunit beta (466 aa).

An ATP-binding site is contributed by 156–163; the sequence is GGAGVGKT.

The protein belongs to the ATPase alpha/beta chains family. In terms of assembly, F-type ATPases have 2 components, CF(1) - the catalytic core - and CF(0) - the membrane proton channel. CF(1) has five subunits: alpha(3), beta(3), gamma(1), delta(1), epsilon(1). CF(0) has three main subunits: a(1), b(2) and c(9-12). The alpha and beta chains form an alternating ring which encloses part of the gamma chain. CF(1) is attached to CF(0) by a central stalk formed by the gamma and epsilon chains, while a peripheral stalk is formed by the delta and b chains.

Its subcellular location is the cell inner membrane. It catalyses the reaction ATP + H2O + 4 H(+)(in) = ADP + phosphate + 5 H(+)(out). Produces ATP from ADP in the presence of a proton gradient across the membrane. The catalytic sites are hosted primarily by the beta subunits. The chain is ATP synthase subunit beta from Dechloromonas aromatica (strain RCB).